The chain runs to 326 residues: Protease HtpX homolog (326 aa).

2 helical membrane passes run 10 to 30 (LNMA…ALAV) and 41 to 61 (VGLM…QWLF). H147 provides a ligand contact to Zn(2+). E148 is an active-site residue. Position 151 (H151) interacts with Zn(2+). 2 helical membrane passes run 159–179 (LLMA…WIFW) and 197–217 (LLFL…LLVL). E224 contributes to the Zn(2+) binding site.

The protein belongs to the peptidase M48B family. Zn(2+) serves as cofactor.

The protein localises to the cell membrane. This chain is Protease HtpX homolog, found in Saccharolobus islandicus (strain Y.N.15.51 / Yellowstone #2) (Sulfolobus islandicus).